A 478-amino-acid chain; its full sequence is 3-isopropylmalate dehydratase large subunit (478 aa).

[4Fe-4S] cluster-binding residues include Cys355, Cys415, and Cys418.

Belongs to the aconitase/IPM isomerase family. LeuC type 1 subfamily. Heterodimer of LeuC and LeuD. It depends on [4Fe-4S] cluster as a cofactor.

The enzyme catalyses (2R,3S)-3-isopropylmalate = (2S)-2-isopropylmalate. The protein operates within amino-acid biosynthesis; L-leucine biosynthesis; L-leucine from 3-methyl-2-oxobutanoate: step 2/4. Catalyzes the isomerization between 2-isopropylmalate and 3-isopropylmalate, via the formation of 2-isopropylmaleate. The protein is 3-isopropylmalate dehydratase large subunit of Paracoccus denitrificans (strain Pd 1222).